Consider the following 390-residue polypeptide: Cold-responsive protein kinase 1 (390 aa).

Residues 41–320 enclose the Protein kinase domain; the sequence is FSAENKIGEG…VRLLTGEKDI (280 aa). Residues 47 to 55 and Lys69 contribute to the ATP site; that span reads IGEGGFGSV. The residue at position 114 (Tyr114) is a Phosphotyrosine. The active-site Proton acceptor is the Asp169. A phosphoserine mark is found at Ser173 and Ser202. Thr203 and Thr208 each carry phosphothreonine. At Tyr216 the chain carries Phosphotyrosine. The interval 345–390 is disordered; the sequence is TKTEQVNRQNYTNPSSSSNGSSRDHSNAYSSGASSANAGNTFSSTI. The span at 354 to 390 shows a compositional bias: low complexity; it reads NYTNPSSSSNGSSRDHSNAYSSGASSANAGNTFSSTI.

Belongs to the protein kinase superfamily. Ser/Thr protein kinase family. In terms of assembly, interacts with and phosphorylates 14-3-3 proteins. Binds to GRF6 at the plasma membrane. Post-translationally, autophosphorylated.

The protein localises to the cell membrane. The enzyme catalyses L-seryl-[protein] + ATP = O-phospho-L-seryl-[protein] + ADP + H(+). The catalysed reaction is L-threonyl-[protein] + ATP = O-phospho-L-threonyl-[protein] + ADP + H(+). Activated by cold. In terms of biological role, negative regulator of freezing tolerance that phosphorylates 14-3-3 proteins (e.g. GRF6) thus triggering their translocation from the cytosol to the nucleus in response to cold stress. The protein is Cold-responsive protein kinase 1 of Arabidopsis thaliana (Mouse-ear cress).